We begin with the raw amino-acid sequence, 451 residues long: Probable DNA polymerase delta small subunit (451 aa).

The protein belongs to the DNA polymerase delta/II small subunit family. In terms of assembly, heterodimer with subunits of 125 kDa and 50 kDa.

The protein resides in the nucleus. It catalyses the reaction DNA(n) + a 2'-deoxyribonucleoside 5'-triphosphate = DNA(n+1) + diphosphate. Its function is as follows. The function of the small subunit is not yet clear. This Caenorhabditis elegans protein is Probable DNA polymerase delta small subunit.